Reading from the N-terminus, the 158-residue chain is Endoribonuclease YbeY (158 aa).

Zn(2+) is bound by residues His119, His123, and His129.

This sequence belongs to the endoribonuclease YbeY family. The cofactor is Zn(2+).

The protein resides in the cytoplasm. Single strand-specific metallo-endoribonuclease involved in late-stage 70S ribosome quality control and in maturation of the 3' terminus of the 16S rRNA. The protein is Endoribonuclease YbeY of Acinetobacter baumannii (strain SDF).